The primary structure comprises 130 residues: Small ribosomal subunit protein uS9 (130 aa).

This sequence belongs to the universal ribosomal protein uS9 family.

This is Small ribosomal subunit protein uS9 from Halalkalibacterium halodurans (strain ATCC BAA-125 / DSM 18197 / FERM 7344 / JCM 9153 / C-125) (Bacillus halodurans).